Reading from the N-terminus, the 235-residue chain is Rab-like protein 3 (235 aa).

Residues Met1 to Asp235 form a small GTPase-like region. GTP contacts are provided by residues Gly16–Ser21, Lys148–Asp150, and Asp179–Cys180.

This sequence belongs to the small GTPase superfamily. Rab family. In terms of assembly, homodimer.

Functionally, required for KRAS signaling regulation and modulation of cell proliferation. Regulator of KRAS prenylation, and probably prenylation of other small GTPases. Required for lymphocyte development and function. Not required for myeloid cell development. The chain is Rab-like protein 3 (rabl3) from Xenopus laevis (African clawed frog).